We begin with the raw amino-acid sequence, 450 residues long: Phosphoglucosamine mutase (450 aa).

Catalysis depends on Ser104, which acts as the Phosphoserine intermediate. 4 residues coordinate Mg(2+): Ser104, Asp243, Asp245, and Asp247. Phosphoserine is present on Ser104.

The protein belongs to the phosphohexose mutase family. Requires Mg(2+) as cofactor. Activated by phosphorylation.

The enzyme catalyses alpha-D-glucosamine 1-phosphate = D-glucosamine 6-phosphate. Functionally, catalyzes the conversion of glucosamine-6-phosphate to glucosamine-1-phosphate. The sequence is that of Phosphoglucosamine mutase from Cutibacterium acnes (strain DSM 16379 / KPA171202) (Propionibacterium acnes).